The sequence spans 1556 residues: Ubiquitin carboxyl-terminal hydrolase 47 (1556 aa).

The segment at 117 to 231 (MKSDGEKAKS…AKKTAKVTSK (115 aa)) is disordered. Residues 146 to 156 (ASGSSSPSKAK) are compositionally biased toward low complexity. 2 positions are modified to phosphoserine: Ser172 and Ser173. Positions 180 to 189 (IKTTAAKISK) are enriched in low complexity. A compositionally biased stretch (basic and acidic residues) spans 191–200 (GSEKAPRASP). The span at 208–219 (TEINSKNTSSES) shows a compositional bias: polar residues. Residue Ser238 is modified to Phosphoserine. A USP domain is found at 396–779 (VGLVNQAMTC…NAYMLMYRQV (384 aa)). Residue Cys405 is the Nucleophile of the active site. 2 stretches are compositionally biased toward polar residues: residues 628 to 642 (NRSG…QLNG) and 661 to 673 (LSSG…SSSQ). Positions 628 to 697 (NRSGNSGEQN…SSSTSKSAKQ (70 aa)) are disordered. Residues 688–697 (SSSTSKSAKQ) show a composition bias toward low complexity. His720 functions as the Proton acceptor in the catalytic mechanism. The tract at residues 1087–1148 (EPMSQPSPSH…LSSPEDEAAS (62 aa)) is disordered. A compositionally biased stretch (basic and acidic residues) spans 1109–1125 (DGDRTLVETDNMAHRGG). Residues 1128–1141 (SQVSSTSHSPQLSS) are compositionally biased toward low complexity. Residues Ser1131, Ser1132, Ser1140, Ser1141, Ser1199, Ser1201, and Ser1205 each carry the phosphoserine modification.

The protein belongs to the peptidase C19 family. In terms of assembly, interacts with ttk.

The protein resides in the nucleus. It carries out the reaction Thiol-dependent hydrolysis of ester, thioester, amide, peptide and isopeptide bonds formed by the C-terminal Gly of ubiquitin (a 76-residue protein attached to proteins as an intracellular targeting signal).. Functionally, ubiquitin-specific protease that deubiquitinates target proteins to regulate different cellular and developmental pathways. Functions downstream of Dsor1/MEK to positively regulate the Ras/MAPK signaling pathway. Likely to modulate the pathway during various cellular and developmental processes including rl/MAPK activation by the receptors InR, Egfr and sevenless/sev. Functions in the post-translational stabilization of rl/MAPK levels in a mechanism that is independent of rl activity and opposes the activity of the E2 enzyme Unc6 and the putative E3 ligases poe, Ufd4 and Kcmf1, which mediate the ubiquitination and proteasomal degradation of rl. During eye development it may also act downstream of rl/MAPK to negatively regulate the Ras/MAPK signaling pathway by stabilizing the transcriptional repressor ttk and consequently inhibiting photoreceptor cell development. This suggests that at least during eye development, it may act in both the positive and negative regulation of the Ras/MAPK signaling pathway to mediate the development of different cell types. Positively regulates border follicle cell migration during oogenesis by mediating the deubiquitination and stabilization of slbo. In the wing disks it positively regulates wg signaling by stabilizing arm. Has an effect on position-effect variegation. In Drosophila melanogaster (Fruit fly), this protein is Ubiquitin carboxyl-terminal hydrolase 47.